We begin with the raw amino-acid sequence, 192 residues long: Crossover junction endodeoxyribonuclease RuvC (192 aa).

Catalysis depends on residues Asp8, Glu67, and Asp139. Mg(2+) is bound by residues Asp8, Glu67, and Asp139.

The protein belongs to the RuvC family. Homodimer which binds Holliday junction (HJ) DNA. The HJ becomes 2-fold symmetrical on binding to RuvC with unstacked arms; it has a different conformation from HJ DNA in complex with RuvA. In the full resolvosome a probable DNA-RuvA(4)-RuvB(12)-RuvC(2) complex forms which resolves the HJ. Requires Mg(2+) as cofactor.

Its subcellular location is the cytoplasm. It carries out the reaction Endonucleolytic cleavage at a junction such as a reciprocal single-stranded crossover between two homologous DNA duplexes (Holliday junction).. In terms of biological role, the RuvA-RuvB-RuvC complex processes Holliday junction (HJ) DNA during genetic recombination and DNA repair. Endonuclease that resolves HJ intermediates. Cleaves cruciform DNA by making single-stranded nicks across the HJ at symmetrical positions within the homologous arms, yielding a 5'-phosphate and a 3'-hydroxyl group; requires a central core of homology in the junction. The consensus cleavage sequence is 5'-(A/T)TT(C/G)-3'. Cleavage occurs on the 3'-side of the TT dinucleotide at the point of strand exchange. HJ branch migration catalyzed by RuvA-RuvB allows RuvC to scan DNA until it finds its consensus sequence, where it cleaves and resolves the cruciform DNA. The chain is Crossover junction endodeoxyribonuclease RuvC from Actinobacillus pleuropneumoniae serotype 5b (strain L20).